Reading from the N-terminus, the 322-residue chain is PI-PLC X domain-containing protein 3 (322 aa).

Residues 22–197 (TLHGIPLTNL…EYQVLVFYHN (176 aa)) enclose the PI-PLC X-box domain. Active-site residues include histidine 37 and histidine 114.

The chain is PI-PLC X domain-containing protein 3 (plcxd3) from Danio rerio (Zebrafish).